The chain runs to 328 residues: dITP/XTP pyrophosphatase (328 aa).

Residues 1–129 (MSEKIYEYKD…ATSEQGFGDT (129 aa)) are unknown. An NTP pyrophosphatase region spans residues 130 to 324 (ILIATRNEGK…KLMEVFPAWQ (195 aa)). 134-139 (TRNEGK) contacts substrate. The Proton acceptor role is filled by aspartate 196. Aspartate 196 provides a ligand contact to Mg(2+). Residues serine 197, 280–283 (FGYD), lysine 303, and 308–309 (HR) each bind substrate.

It belongs to the HAM1 NTPase family. As to quaternary structure, homodimer. Requires Mg(2+) as cofactor.

The catalysed reaction is XTP + H2O = XMP + diphosphate + H(+). It carries out the reaction dITP + H2O = dIMP + diphosphate + H(+). It catalyses the reaction ITP + H2O = IMP + diphosphate + H(+). Its function is as follows. Pyrophosphatase that catalyzes the hydrolysis of nucleoside triphosphates to their monophosphate derivatives, with a high preference for the non-canonical purine nucleotides XTP (xanthosine triphosphate), dITP (deoxyinosine triphosphate) and ITP. Seems to function as a house-cleaning enzyme that removes non-canonical purine nucleotides from the nucleotide pool, thus preventing their incorporation into DNA/RNA and avoiding chromosomal lesions. The chain is dITP/XTP pyrophosphatase from Streptococcus pyogenes serotype M6 (strain ATCC BAA-946 / MGAS10394).